We begin with the raw amino-acid sequence, 227 residues long: Cytidylate kinase (227 aa).

12–20 (GPSGAGKGT) serves as a coordination point for ATP.

This sequence belongs to the cytidylate kinase family. Type 1 subfamily.

The protein resides in the cytoplasm. The enzyme catalyses CMP + ATP = CDP + ADP. It catalyses the reaction dCMP + ATP = dCDP + ADP. This chain is Cytidylate kinase, found in Salmonella arizonae (strain ATCC BAA-731 / CDC346-86 / RSK2980).